Reading from the N-terminus, the 505-residue chain is Histidine ammonia-lyase (505 aa).

The 5-imidazolinone (Ala-Gly) cross-link spans 141–143 (ASG). 2,3-didehydroalanine (Ser) is present on Ser-142.

The protein belongs to the PAL/histidase family. Contains an active site 4-methylidene-imidazol-5-one (MIO), which is formed autocatalytically by cyclization and dehydration of residues Ala-Ser-Gly.

The protein localises to the cytoplasm. It carries out the reaction L-histidine = trans-urocanate + NH4(+). The protein operates within amino-acid degradation; L-histidine degradation into L-glutamate; N-formimidoyl-L-glutamate from L-histidine: step 1/3. This Bacillus anthracis protein is Histidine ammonia-lyase.